Here is a 259-residue protein sequence, read N- to C-terminus: Ferritin-3, chloroplastic (259 aa).

The N-terminal 49 residues, 1-49, are a transit peptide targeting the chloroplast; the sequence is MLLKAASTFSLLNIHGEKKDISPLFSSSSSISSPVSSGKSGNLSFPLRA. The segment at 50–88 is extension peptide (EP); sequence SKSSTTTTSTLSGVVFEPFEEVKKEMDLVPSGQQLSLAR. In terms of domain architecture, Ferritin-like diiron spans 89–242; it reads HLYSPECEAA…EYVSQLRRLG (154 aa). The Fe cation site is built by Glu106, Glu141, His144, Glu190, and Gln224.

The protein belongs to the ferritin family. Oligomer of 24 subunits. There are two types of subunits: L (light) chain and H (heavy) chain. The major chain can be light or heavy, depending on the species and tissue type. The functional molecule forms a roughly spherical shell with a diameter of 12 nm and contains a central cavity into which the insoluble mineral iron core is deposited.

It localises to the plastid. The protein resides in the chloroplast. It carries out the reaction 4 Fe(2+) + O2 + 4 H(+) = 4 Fe(3+) + 2 H2O. Stores iron in a soluble, non-toxic, readily available form. Important for iron homeostasis. Has ferroxidase activity. Iron is taken up in the ferrous form and deposited as ferric hydroxides after oxidation. This chain is Ferritin-3, chloroplastic (FER3), found in Arabidopsis thaliana (Mouse-ear cress).